We begin with the raw amino-acid sequence, 201 residues long: QRFPQRYIELAIVVDHGMYKKYNQNSDKIKVRVHQMVNHINEMYRPLNIAISLNRLQIWSKKDLITVKSASNVTLESFGNWRETVLLKQQNNDCAHLLTATNLNDNTIGLAYKKGMCNPKLSVGLVQDYSPNVFMVAVTMTHELGHNLGMEHDDKDKCKCEACIMSDVISDKPSKLFSDCSKNDYQTFLTKYNPQCILNAP.

Gln1 is subject to Pyrrolidone carboxylic acid. Residues 6-201 (RYIELAIVVD…YNPQCILNAP (196 aa)) enclose the Peptidase M12B domain. The N-linked (GlcNAc...) asparagine glycan is linked to Asn72. 3 disulfides stabilise this stretch: Cys117–Cys196, Cys158–Cys180, and Cys160–Cys163. Residue His142 coordinates Zn(2+). Glu143 is a catalytic residue. The Zn(2+) site is built by His146 and His152.

This sequence belongs to the venom metalloproteinase (M12B) family. P-I subfamily. In terms of assembly, monomer. Zn(2+) serves as cofactor. As to expression, expressed by the venom gland.

It is found in the secreted. It catalyses the reaction Cleavage of 3-Asn-|-Gln-4, 10-His-|-Leu-11 and 14-Ala-|-Leu-15 in the insulin B chain, and the bond Z-Gly-Pro-|-Leu-Gly-Pro in a small molecule substrate of microbial collagenase.. Its function is as follows. Major venom non-hemorrhagic metalloproteinase. The polypeptide is Snake venom metalloproteinase trimerelysin-2 (Protobothrops flavoviridis (Habu)).